The sequence spans 529 residues: Acid-sensing ion channel 1C (529 aa).

At 1–51 (MTAMKGDSEDSIESMRPSNLQVFANNSTLHGMSHIFAYGHMTFRRFLWTLS) the chain is on the cytoplasmic side. A helical membrane pass occupies residues 52–68 (FMGSLGLLMYVCMDRVY). Over 69–427 (YYFEFPHVTK…EKIEQKKAYE (359 aa)) the chain is Extracellular. Residues asparagine 86, asparagine 155, and asparagine 161 are each glycosylated (N-linked (GlcNAc...) asparagine). 7 cysteine pairs are disulfide-bonded: cysteine 95-cysteine 196, cysteine 174-cysteine 181, cysteine 292-cysteine 367, cysteine 310-cysteine 363, cysteine 314-cysteine 361, cysteine 323-cysteine 345, and cysteine 325-cysteine 337. Asparagine 185 carries an N-linked (GlcNAc...) asparagine glycan. N-linked (GlcNAc...) asparagine glycans are attached at residues asparagine 368 and asparagine 395. Residues 428–458 (VAGLLGDIGGQMGLFIGASVLTILEIFDYLY) traverse the membrane as a discontinuously helical segment. The GAS motif; ion selectivity filter signature appears at 444–446 (GAS). Topologically, residues 459–529 (EVLKDKILGS…PFVVGSNSGK (71 aa)) are cytoplasmic.

The protein belongs to the amiloride-sensitive sodium channel (TC 1.A.6) family. ASIC1 subfamily. Homotrimer. Heterotrimer; with other ASIC proteins producing channel with different properties. Interacts with asic1a. Expressed in central nervous system.

The protein localises to the cell membrane. Its subcellular location is the postsynaptic cell membrane. It localises to the cell projection. The protein resides in the dendrite. It catalyses the reaction Na(+)(in) = Na(+)(out). The catalysed reaction is K(+)(in) = K(+)(out). It carries out the reaction Li(+)(in) = Li(+)(out). The enzyme catalyses Ca(2+)(in) = Ca(2+)(out). With respect to regulation, inhibited by the diuretic drug amiloride. Functionally, forms voltage-independent, pH-gated trimeric sodium channels that act as postsynaptic excitatory receptors in the nervous system, playing a crucial role in regulating synaptic plasticity, learning, and memory. Upon extracellular pH drop this channel elicits transient, fast activating, and completely desensitizing inward currents. Displays high selectivity for sodium ions but can also permit the permeation of other cations. The chain is Acid-sensing ion channel 1C from Danio rerio (Zebrafish).